Reading from the N-terminus, the 569-residue chain is Protein AF-9 (569 aa).

The 138-residue stretch at 1–138 folds into the YEATS domain; sequence MASSCAVQVK…EDFRRKLLKA (138 aa). Positions 138–476 are disordered; sequence AGGDPNRSIH…PPPPLLKTNN (339 aa). Over residues 149 to 190 the composition is skewed to low complexity; sequence SSSSSSSSSSSSSSSSSSSSSSSSSSSSSSSSSSSSSSSSSS. Basic and acidic residues predominate over residues 202 to 265; that stretch reads EHKEKPSKDS…PKPMSKEPKA (64 aa). Ser-289 and Ser-295 each carry phosphoserine. Residues 296-301 carry the Nuclear localization signal motif; the sequence is AKKRKK. Low complexity predominate over residues 304–314; it reads SEALFKSFSSA. Over residues 323 to 350 the composition is skewed to basic and acidic residues; that stretch reads ADKKQIKDKSHVKMGKVKIESETSEKKK. A Glycyl lysine isopeptide (Lys-Gly) (interchain with G-Cter in SUMO2) cross-link involves residue Lys-340. A compositionally biased stretch (acidic residues) spans 358–369; that stretch reads DIVDPNDSDVEE. Over residues 372 to 396 the composition is skewed to low complexity; it reads SSKSDSEQPSPASSSSSSSSSFTPS. 2 positions are modified to phosphoserine: Ser-413 and Ser-420. The span at 415-430 shows a compositional bias: acidic residues; the sequence is DNEEESDEAEDNDNDS. Low complexity predominate over residues 446 to 462; sequence VSLSDGSDSESSSASSP. Residue Ser-484 is modified to Phosphoserine.

As to quaternary structure, component of the super elongation complex (SEC), at least composed of EAF1, EAF2, CDK9, MLLT3/AF9, AFF (AFF1 or AFF4), the P-TEFb complex and ELL (ELL, ELL2 or ELL3). Interacts with BCOR. Interacts with CBX8. Interacts with ALKBH4. Ubiquitously expressed. Strong expression in the spleen.

It localises to the nucleus. The protein localises to the chromosome. Chromatin reader component of the super elongation complex (SEC), a complex required to increase the catalytic rate of RNA polymerase II transcription by suppressing transient pausing by the polymerase at multiple sites along the DNA. Specifically recognizes and binds acylated histone H3, with a preference for histone H3 that is crotonylated. Crotonylation marks active promoters and enhancers and confers resistance to transcriptional repressors. Recognizes and binds histone H3 crotonylated at 'Lys-9' (H3K9cr), and with slightly lower affinity histone H3 crotonylated at 'Lys-18' (H3K18cr). Also recognizes and binds histone H3 acetylated and butyrylated at 'Lys-9' (H3K9ac and H3K9bu, respectively), but with lower affinity than crotonylated histone H3. In the SEC complex, MLLT3 is required to recruit the complex to crotonylated histones. Recruitment of the SEC complex to crotonylated histones promotes recruitment of DOT1L on active chromatin to deposit histone H3 'Lys-79' methylation (H3K79me). Plays a key role in hematopoietic stem cell (HSC) maintenance by preserving, rather than conferring, HSC stemness. Acts by binding to the transcription start site of active genes in HSCs and sustaining level of H3K79me2, probably by recruiting DOT1L. This is Protein AF-9 (Mllt3) from Mus musculus (Mouse).